A 276-amino-acid polypeptide reads, in one-letter code: Formamidopyrimidine-DNA glycosylase (276 aa).

Pro2 functions as the Schiff-base intermediate with DNA in the catalytic mechanism. Glu3 (proton donor) is an active-site residue. The active-site Proton donor; for beta-elimination activity is the Lys58. Residues His94, Arg112, and Arg157 each contribute to the DNA site. The FPG-type zinc finger occupies 242–276; it reads FVYDRAGQPCRVCGTPIKQIVQGQRSTYYCPTCQR. Arg266 serves as the catalytic Proton donor; for delta-elimination activity.

This sequence belongs to the FPG family. Monomer. The cofactor is Zn(2+).

It catalyses the reaction Hydrolysis of DNA containing ring-opened 7-methylguanine residues, releasing 2,6-diamino-4-hydroxy-5-(N-methyl)formamidopyrimidine.. It carries out the reaction 2'-deoxyribonucleotide-(2'-deoxyribose 5'-phosphate)-2'-deoxyribonucleotide-DNA = a 3'-end 2'-deoxyribonucleotide-(2,3-dehydro-2,3-deoxyribose 5'-phosphate)-DNA + a 5'-end 5'-phospho-2'-deoxyribonucleoside-DNA + H(+). Its function is as follows. Involved in base excision repair of DNA damaged by oxidation or by mutagenic agents. Acts as a DNA glycosylase that recognizes and removes damaged bases. Has a preference for oxidized purines, such as 7,8-dihydro-8-oxoguanine (8-oxoG). Has AP (apurinic/apyrimidinic) lyase activity and introduces nicks in the DNA strand. Cleaves the DNA backbone by beta-delta elimination to generate a single-strand break at the site of the removed base with both 3'- and 5'-phosphates. The chain is Formamidopyrimidine-DNA glycosylase from Paraburkholderia phymatum (strain DSM 17167 / CIP 108236 / LMG 21445 / STM815) (Burkholderia phymatum).